Here is a 332-residue protein sequence, read N- to C-terminus: DNA-directed RNA polymerase 2A (332 aa).

Residues Asp33, Lys108, and Asp265 contribute to the active site.

The protein belongs to the phage and mitochondrial RNA polymerase family.

The enzyme catalyses RNA(n) + a ribonucleoside 5'-triphosphate = RNA(n+1) + diphosphate. Functionally, DNA-dependent RNA polymerase catalyzes the transcription of DNA into RNA using the four ribonucleoside triphosphates as substrates. This chain is DNA-directed RNA polymerase 2A (RPOT2-SYL), found in Nicotiana tabacum (Common tobacco).